The primary structure comprises 385 residues: 28S rRNA (uridine-N(3))-methyltransferase (385 aa).

2 disordered regions span residues 1 to 35 and 47 to 72; these read MAERPRKRPCGPGEHGQRVEWRKWKQQKKEEKKKW and QRAQEEEAKRQEEEEEAAAQRSNQGR. 2 stretches are compositionally biased toward basic and acidic residues: residues 15–35 and 47–58; these read HGQRVEWRKWKQQKKEEKKKW and QRAQEEEAKRQE. 4 residues coordinate S-adenosyl-L-methionine: arginine 293, glycine 313, asparagine 342, and threonine 343.

It belongs to the class IV-like SAM-binding methyltransferase superfamily. As to quaternary structure, interacts with INCA1.

It localises to the cytoplasm. It is found in the cytoskeleton. The protein localises to the spindle. The protein resides in the chromosome. Its subcellular location is the centromere. It localises to the kinetochore. It is found in the microtubule organizing center. The protein localises to the centrosome. It catalyses the reaction uridine in 28S rRNA + S-adenosyl-L-methionine = N(3)-methyluridine in 28S rRNA + S-adenosyl-L-homocysteine + H(+). S-adenosyl-L-methionine-dependent methyltransferase that specifically methylates the N3 position of a uridine in 28S rRNA. Required for association of the centrosomes with the poles of the bipolar mitotic spindle during metaphase. Also involved in chromosome alignment. May promote centrosome maturation probably by recruiting A-kinase anchor protein AKAP9 to centrosomes in early mitosis. Binds specifically to miRNA MIR145 hairpin, regulates MIR145 expression at a postranscriptional level. This Mus musculus (Mouse) protein is 28S rRNA (uridine-N(3))-methyltransferase.